Consider the following 517-residue polypeptide: Ribonuclease Y (517 aa).

Residues 1–21 traverse the membrane as a helical segment; sequence MIEVVVGIGAGLIGIGAGYLV. Residues 207 to 273 enclose the KH domain; that stretch reads LINVVNIKND…TRVIELLVED (67 aa). Residues 333-426 enclose the HD domain; it reads ALAHSLEVAH…VCAADALSAA (94 aa).

Belongs to the RNase Y family.

It is found in the cell membrane. In terms of biological role, endoribonuclease that initiates mRNA decay. This chain is Ribonuclease Y, found in Campylobacter fetus subsp. fetus (strain 82-40).